A 522-amino-acid polypeptide reads, in one-letter code: Probable protein kinase UbiB (522 aa).

Residues 119–496 enclose the Protein kinase domain; the sequence is SFDADPVASA…QRRTNRLLLT (378 aa). Residues 125-133 and lysine 147 contribute to the ATP site; that span reads VASASIAQV. Aspartate 282 serves as the catalytic Proton acceptor. Residues 494–514 traverse the membrane as a helical segment; sequence LLTVFYLIGGFVAGGLFAHWI.

The protein belongs to the ABC1 family. UbiB subfamily.

The protein localises to the cell inner membrane. It participates in cofactor biosynthesis; ubiquinone biosynthesis [regulation]. Functionally, is probably a protein kinase regulator of UbiI activity which is involved in aerobic coenzyme Q (ubiquinone) biosynthesis. The protein is Probable protein kinase UbiB of Leptothrix cholodnii (strain ATCC 51168 / LMG 8142 / SP-6) (Leptothrix discophora (strain SP-6)).